Here is a 463-residue protein sequence, read N- to C-terminus: L-seryl-tRNA(Sec) selenium transferase (463 aa).

Residue lysine 295 is modified to N6-(pyridoxal phosphate)lysine.

This sequence belongs to the SelA family. As to quaternary structure, homodecamer; pentamer of dimers. Binds only one seryl-tRNA(Sec) per dimer. Pyridoxal 5'-phosphate is required as a cofactor.

Its subcellular location is the cytoplasm. The enzyme catalyses L-seryl-tRNA(Sec) + selenophosphate + H(+) = L-selenocysteinyl-tRNA(Sec) + phosphate. It functions in the pathway aminoacyl-tRNA biosynthesis; selenocysteinyl-tRNA(Sec) biosynthesis; selenocysteinyl-tRNA(Sec) from L-seryl-tRNA(Sec) (bacterial route): step 1/1. Its function is as follows. Converts seryl-tRNA(Sec) to selenocysteinyl-tRNA(Sec) required for selenoprotein biosynthesis. This Shigella boydii serotype 18 (strain CDC 3083-94 / BS512) protein is L-seryl-tRNA(Sec) selenium transferase.